A 237-amino-acid chain; its full sequence is Ubiquinone/menaquinone biosynthesis C-methyltransferase UbiE (237 aa).

S-adenosyl-L-methionine is bound by residues Thr-60 and Asp-80.

The protein belongs to the class I-like SAM-binding methyltransferase superfamily. MenG/UbiE family.

It carries out the reaction a 2-demethylmenaquinol + S-adenosyl-L-methionine = a menaquinol + S-adenosyl-L-homocysteine + H(+). The catalysed reaction is a 2-methoxy-6-(all-trans-polyprenyl)benzene-1,4-diol + S-adenosyl-L-methionine = a 5-methoxy-2-methyl-3-(all-trans-polyprenyl)benzene-1,4-diol + S-adenosyl-L-homocysteine + H(+). It participates in quinol/quinone metabolism; menaquinone biosynthesis; menaquinol from 1,4-dihydroxy-2-naphthoate: step 2/2. It functions in the pathway cofactor biosynthesis; ubiquinone biosynthesis. Functionally, methyltransferase required for the conversion of demethylmenaquinol (DMKH2) to menaquinol (MKH2) and the conversion of 2-polyprenyl-6-methoxy-1,4-benzoquinol (DDMQH2) to 2-polyprenyl-3-methyl-6-methoxy-1,4-benzoquinol (DMQH2). This Syntrophotalea carbinolica (strain DSM 2380 / NBRC 103641 / GraBd1) (Pelobacter carbinolicus) protein is Ubiquinone/menaquinone biosynthesis C-methyltransferase UbiE.